Here is a 1337-residue protein sequence, read N- to C-terminus: ATP-dependent helicase/nuclease subunit A (1337 aa).

The UvrD-like helicase ATP-binding domain maps to 3–484 (FTPSKEQEPA…LDLSDNYRSR (482 aa)). 24-31 (ASAGSGKT) is an ATP binding site. The region spanning 522–867 (ADRDQASPAT…NVMTIHKSKG (346 aa)) is the UvrD-like helicase C-terminal domain.

Belongs to the helicase family. AddA subfamily. In terms of assembly, heterodimer of AddA and AddB/RexB. Mg(2+) serves as cofactor.

It carries out the reaction Couples ATP hydrolysis with the unwinding of duplex DNA by translocating in the 3'-5' direction.. The enzyme catalyses ATP + H2O = ADP + phosphate + H(+). Functionally, the heterodimer acts as both an ATP-dependent DNA helicase and an ATP-dependent, dual-direction single-stranded exonuclease. Recognizes the chi site generating a DNA molecule suitable for the initiation of homologous recombination. The AddA nuclease domain is required for chi fragment generation; this subunit has the helicase and 3' -&gt; 5' nuclease activities. This chain is ATP-dependent helicase/nuclease subunit A, found in Limosilactobacillus fermentum (strain NBRC 3956 / LMG 18251) (Lactobacillus fermentum).